Consider the following 352-residue polypeptide: Cyclin-dependent kinase-like 1 (352 aa).

Residues 4-287 (YEKIGKIGEG…CEQLLQHPYF (284 aa)) enclose the Protein kinase domain. ATP contacts are provided by residues 10 to 18 (IGEGSYGVV) and K33. The [NKR]KIAxRE motif lies at 45–51 (KKIALRE). D126 acts as the Proton acceptor in catalysis.

The protein belongs to the protein kinase superfamily. CMGC Ser/Thr protein kinase family. CDC2/CDKX subfamily.

The protein localises to the cytoplasm. Its subcellular location is the nucleus. It carries out the reaction L-seryl-[protein] + ATP = O-phospho-L-seryl-[protein] + ADP + H(+). The enzyme catalyses L-threonyl-[protein] + ATP = O-phospho-L-threonyl-[protein] + ADP + H(+). This Rattus norvegicus (Rat) protein is Cyclin-dependent kinase-like 1.